Reading from the N-terminus, the 183-residue chain is Small ribosomal subunit protein eS10z (183 aa).

The tract at residues 91 to 183 is disordered; it reads LKKSARPPGR…GAGPTSSSME (93 aa). Basic and acidic residues predominate over residues 109-130; sequence DRPRGPPRFEGDRPRFGDRDGY. Gly residues-rich tracts occupy residues 131 to 146 and 161 to 175; these read RGGP…GEKG and GRPG…GFGA.

This sequence belongs to the eukaryotic ribosomal protein eS10 family.

It localises to the cytoplasm. This chain is Small ribosomal subunit protein eS10z, found in Oryza sativa subsp. japonica (Rice).